Reading from the N-terminus, the 505-residue chain is Elsinochrome transporter 1 (505 aa).

A compositionally biased stretch (gly residues) spans 1–10 (MALSGLGSGP). The segment at 1-25 (MALSGLGSGPEGNPNNHQGKAIPTL) is disordered. Residues 35–55 (FLFSWVSFLVPFWSWYPFSPL) traverse the membrane as a helical segment. 2 N-linked (GlcNAc...) asparagine glycosylation sites follow: Asn-64 and Asn-80. The tract at residues 221–295 (DTPTGAGKPP…TEKGESLPLT (75 aa)) is disordered. Residues 255–267 (TPSSPDRSSSTNS) are compositionally biased toward low complexity. 6 helical membrane-spanning segments follow: residues 313-333 (VIFSGPTLVLGACYFCTFGAE), 348-368 (LGLGLQNAGNLAAIFGLLNIV), 391-411 (KALLHTYCVMTGVFCIAIGLA), 417-437 (ATLVGLVSGGLAFFLEGANGL), 449-469 (VVSGFTGACGNLGGIVFAIVF), and 479-499 (VFWIIGAIIIGLQVATCWIKP).

It belongs to the major facilitator superfamily. Nitrate/nitrite porter (TC 2.A.1.8) family.

It localises to the cell membrane. Its function is as follows. Major facilitator-type transporter; part of the gene cluster that mediates the biosynthesis of elsinochromes, pigments consisting of at least four interconvertible tautomers (A, B, C and D) that have a core phenolic quinone to which various side chains are attached and which play an important role in fungal pathogenesis. Once elsinochrome is synthesized, it must be exported outside the fungal cells, which is probably accomplished by the ECT1 transporter, to avoid toxicity. The polypeptide is Elsinochrome transporter 1 (Elsinoe fawcettii (Citrus scab fungus)).